A 362-amino-acid polypeptide reads, in one-letter code: Methylthioribose-1-phosphate isomerase (362 aa).

Residues 49–51 (RGA), arginine 89, and glutamine 201 each bind substrate. Residue aspartate 242 is the Proton donor of the active site. 252-253 (NK) serves as a coordination point for substrate.

This sequence belongs to the eIF-2B alpha/beta/delta subunits family. MtnA subfamily.

It carries out the reaction 5-(methylsulfanyl)-alpha-D-ribose 1-phosphate = 5-(methylsulfanyl)-D-ribulose 1-phosphate. It participates in amino-acid biosynthesis; L-methionine biosynthesis via salvage pathway; L-methionine from S-methyl-5-thio-alpha-D-ribose 1-phosphate: step 1/6. Catalyzes the interconversion of methylthioribose-1-phosphate (MTR-1-P) into methylthioribulose-1-phosphate (MTRu-1-P). This is Methylthioribose-1-phosphate isomerase from Leptospira borgpetersenii serovar Hardjo-bovis (strain JB197).